The chain runs to 349 residues: C-X-C chemokine receptor type 1 (349 aa).

Topologically, residues 1–44 (MAEAEYFIWIAPEGDFEEEFGNITRMLPTGEYFSPCKRVPMTNR) are extracellular. N-linked (GlcNAc...) asparagine glycosylation is present at asparagine 22. A helical transmembrane segment spans residues 45–71 (QAVVVFYALVFLLSLLGNSLVMLVILY). Over 72–80 (RRRTRSVTD) the chain is Cytoplasmic. The helical transmembrane segment at 81 to 101 (VYVLNLAIADLLFSLTLPFLA) threads the bilayer. The Extracellular segment spans residues 102–116 (VSKWKGWIFGTPLCK). A disulfide bridge connects residues cysteine 115 and cysteine 192. The helical transmembrane segment at 117 to 138 (MVSLLKEVNFFSGILLLACISV) threads the bilayer. Residues 139–159 (DRYLAIVHATRTLTRKRYLVK) lie on the Cytoplasmic side of the membrane. Residues 160–179 (FVCMGTWGLSLVLSLPFAIF) form a helical membrane-spanning segment. The Extracellular segment spans residues 180-204 (RQAYKPYRSGTVCYEVLGEATADLR). The chain crosses the membrane as a helical span at residues 205 to 225 (ITLRGLSHIFGFLLPLFIMLV). Residues 226–247 (CYGLTLRTLFKAHMRQKRRAMW) are Cytoplasmic-facing. The helical transmembrane segment at 248 to 269 (VIFAVVLVFLLCCLPYNLVLLS) threads the bilayer. The Extracellular segment spans residues 270 to 290 (DTLLGAHLIQDTCERRNNIDQ). A helical membrane pass occupies residues 291 to 313 (ALYITEILGFSHSCLNPVIYAFV). Topologically, residues 314–349 (GQSFRHEFLKILANLVHKEVLTHHSASFRTSLTTIY) are cytoplasmic.

Belongs to the G-protein coupled receptor 1 family. In terms of assembly, interacts with IL8. Interacts with GNAI2.

It is found in the cell membrane. Receptor to interleukin-8, which is a powerful neutrophils chemotactic factor. Binding of IL-8 to the receptor causes activation of neutrophils. This response is mediated via a G-protein that activates a phosphatidylinositol-calcium second messenger system. The polypeptide is C-X-C chemokine receptor type 1 (Cxcr1) (Rattus norvegicus (Rat)).